Reading from the N-terminus, the 173-residue chain is MSKHTNIPMFRIGIGYDVHRFDNINNDDSNTSITICGIEINYHKKIIAHSDGDVGLHALADAILGAVGCGSIGQHFPNTDQKWKNAKSSHFVIEAQKKAQERGYIISNADIIIICEQPKIMPYALEMQHYIAQFTSIDPSFINIKATTTEKLGAIGRNEGIAAQAIVLCSQQY.

Residues aspartate 17 and histidine 19 each contribute to the a divalent metal cation site. Residues 17–19 (DVH) and 49–50 (HS) each bind 4-CDP-2-C-methyl-D-erythritol 2-phosphate. Histidine 57 contributes to the a divalent metal cation binding site. 4-CDP-2-C-methyl-D-erythritol 2-phosphate is bound by residues 76-80 (FPNTD), 147-150 (TTTE), and arginine 157.

It belongs to the IspF family. In terms of assembly, homotrimer. The cofactor is a divalent metal cation.

The catalysed reaction is 4-CDP-2-C-methyl-D-erythritol 2-phosphate = 2-C-methyl-D-erythritol 2,4-cyclic diphosphate + CMP. It functions in the pathway isoprenoid biosynthesis; isopentenyl diphosphate biosynthesis via DXP pathway; isopentenyl diphosphate from 1-deoxy-D-xylulose 5-phosphate: step 4/6. Functionally, involved in the biosynthesis of isopentenyl diphosphate (IPP) and dimethylallyl diphosphate (DMAPP), two major building blocks of isoprenoid compounds. Catalyzes the conversion of 4-diphosphocytidyl-2-C-methyl-D-erythritol 2-phosphate (CDP-ME2P) to 2-C-methyl-D-erythritol 2,4-cyclodiphosphate (ME-CPP) with a corresponding release of cytidine 5-monophosphate (CMP). This chain is 2-C-methyl-D-erythritol 2,4-cyclodiphosphate synthase, found in Ehrlichia ruminantium (strain Gardel).